Here is a 321-residue protein sequence, read N- to C-terminus: Serine/threonine-protein phosphatase PP1 isozyme 4 (321 aa).

A2 carries the post-translational modification N-acetylalanine. 4 residues coordinate Mn(2+): D74, H76, D102, and N134. Residue H135 is the Proton donor of the active site. 2 residues coordinate Mn(2+): H183 and H258.

This sequence belongs to the PPP phosphatase family. PP-1 subfamily. As to quaternary structure, interacts with the DELLA proteins RGA and GAI. Interacts with PIF3 and PIF5. Interacts with the auxin efflux carrier PIN1. It depends on Mn(2+) as a cofactor. In terms of tissue distribution, expressed in the vasculature of roots and cotyledons, tips of leaves, guard cells, bases of trichomes, pistils and stamen filaments.

It localises to the nucleus. The protein localises to the cytoplasm. It carries out the reaction O-phospho-L-seryl-[protein] + H2O = L-seryl-[protein] + phosphate. The enzyme catalyses O-phospho-L-threonyl-[protein] + H2O = L-threonyl-[protein] + phosphate. With respect to regulation, phosphatase activity is strongly reduced by the protein phosphatase inhibitor 2 (I-2). In terms of biological role, serine/threonine-protein phosphatase that possesses phosphatase activity toward para-nitrophenyl phosphate (pNPP) in vitro. Acts as a positive regulator in the gibberellin (GA) signaling pathway to regulate plant growth and development. Promotes the GA-induced and proteasomal-dependent degradation of the DELLA proteins RGA and GAI by directly binding and dephosphorylating these proteins. Involved in the regulation of phytochrome B (phyB) signaling pathway that controls photomorphogenesis. Promotes the proteasomal-dependent degradation of PIF5 factor by directly binding and dephosphorylating this protein. Involved in the regulation of pavement cell (PC) interdigitation by modulating the auxin efflux carrier PIN1 polarity and endocytic trafficking. Regulates PIN1 polar targeting through direct binding and dephosphorylation. Acts antagonistically with PID in regulating PC development. The protein is Serine/threonine-protein phosphatase PP1 isozyme 4 of Arabidopsis thaliana (Mouse-ear cress).